The primary structure comprises 177 residues: R-phycoerythrin beta chain (177 aa).

2 residues coordinate phycourobilin: Cys50 and Cys61. At Asn72 the chain carries N4-methylasparagine. Residues Cys82 and Cys158 each coordinate (2R,3E)-phycoerythrobilin.

The protein belongs to the phycobiliprotein family. In terms of assembly, heterodimer of an alpha and a beta chain. Contains two covalently linked phycoerythrobilin chromophores and one covalently linked phycourobilin chromophore.

The protein resides in the plastid. The protein localises to the chloroplast thylakoid membrane. Functionally, light-harvesting photosynthetic bile pigment-protein from the phycobiliprotein complex. This chain is R-phycoerythrin beta chain (cpeB), found in Porphyra purpurea (Red seaweed).